Here is a 981-residue protein sequence, read N- to C-terminus: METKGYHSLPEGLDMERRWSQVSQTLERSSLGPAERTTENNYMEIVNVSCVSGAIPNNSTQGSSKEKHELLPYIQQDNSRSGILPSDIKTELESKELSATVAESMGLYMDSVRDAEYTYDQQNQQGSLSPTKIYQNMEQLVKFYKENGHRSSTLSAMSRPLRSFMPDSAASMNGGALRAIVKSPIICHEKSSSVSSPLNMASSVCSPVGINSMSSSTTSFGSFPVHSPITQGTSLTCSPSVENRGSRSHSPTHASNVGSPLSSPLSSMKSPISSPPSHCSVKSPVSSPNNVPLRSSVSSPANLNNSRCSVSSPSNNTNNRSTLSSPTASTVGSIGSPISNAFSYATSGASAGAGAIQDVVPSPDTHEKGAHDVPFPKTEEVEKAISNGVTGPLNIVQYIKSEPDGAFSSSCLGGNSKISPSSPFSVPIKQESSKHSCSGASFKGNPTVNPFPFMDGSYFSFMDDKDYYSLSGILGPPVPGFDGSCEDSAFPVGIKQEPDDGSYYPEASIPSSAIVGVNSGGQSFHYRIGAQGTISLSRSPRDQSFQHLSSFPPVNTLVESWKPHGDLSSRRSDGYPVLEYIPENVSSSTLRSVSTGSSRPSKICLVCGDEASGCHYGVVTCGSCKVFFKRAVEGQHNYLCAGRNDCIIDKIRRKNCPACRLQKCLQAGMNLGARKSKKLGKLKGLHEEQPQQPPPPPPQSPEEGTTYIAPTKEPSVNSALVPQLTSITHALTPSPAMILENIEPETVYAGYDNSKPDTAESLLSTLNRLAAKQMIQVVKWAKVLPGFKNLPLEDQITLIQYSWMCLSSFALSWRSYKHTNSQLLYFAPDLVFNEEKMHQSAMYELCQGMRQISLQFVRLQLTFEEYSIMKVLLLLSTVPKDGLKSQAAFEEMRTNYIKELRKMVTKCPNSSGQSWQRFYQLTKLLDSMHDLVSDLLEFCFYTFRESQALKVEFPAMLVEIITDQLPKVESGNAKPLYFHRK.

A modulating region spans residues 1–603 (METKGYHSLP…STGSSRPSKI (603 aa)). Residues 234–258 (SLTCSPSVENRGSRSHSPTHASNVG) show a composition bias toward polar residues. Disordered regions lie at residues 234-331 (SLTC…ASTV) and 355-376 (AIQDVVPSPDTHEKGAHDVPFP). Ser-250, Ser-259, Ser-283, Ser-287, and Ser-299 each carry phosphoserine. Composition is skewed to low complexity over residues 259-300 (SPLS…VSSP) and 309-327 (SVSSPSNNTNNRSTLSSPT). 8 residues coordinate Zn(2+): Cys-604, Cys-607, Cys-621, Cys-624, Cys-640, Cys-646, Cys-656, and Cys-659. NR C4-type zinc fingers lie at residues 604-624 (CLVCGDEASGCHYGVVTCGSC) and 640-664 (CAGRNDCIIDKIRRKNCPACRLQKC). A DNA-binding region (nuclear receptor) is located at residues 604-669 (CLVCGDEASG…RLQKCLQAGM (66 aa)). The segment at 670 to 722 (NLGARKSKKLGKLKGLHEEQPQQPPPPPPQSPEEGTTYIAPTKEPSVNSALVP) is hinge. The disordered stretch occupies residues 684–710 (GLHEEQPQQPPPPPPQSPEEGTTYIAP). Over residues 691–700 (QQPPPPPPQS) the composition is skewed to pro residues. One can recognise an NR LBD domain in the interval 723 to 961 (QLTSITHALT…EFPAMLVEII (239 aa)). 21-hydroxyprogesterone is bound by residues Asn-767 and Gln-773. The aldosterone site is built by Asn-767 and Gln-773. Asn-767 and Gln-773 together coordinate progesterone. Positions 779-782 (KWAK) are important for coactivator binding. Positions 814 and 942 each coordinate 21-hydroxyprogesterone. Aldosterone-binding residues include Arg-814 and Thr-942. Progesterone contacts are provided by Arg-814 and Thr-942.

Belongs to the nuclear hormone receptor family. NR3 subfamily. As to quaternary structure, heteromultimeric cytoplasmic complex with HSP90, HSP70, and FKBP4, in the absence of ligand. After ligand binding, it translocates to the nucleus and binds to DNA as a homodimer and as a heterodimer with NR3C1. Binds the coactivator NCOA2. May interact with HSD11B2 in the absence of ligand. Binds the coactivators NCOA1, TIF1 and NRIP1. Post-translationally, phosphorylated. In terms of tissue distribution, detected in liver, brain, heart, kidney, colon, aorta, hippocampus, hypothalamus and adrenal fasciculata.

The protein localises to the cytoplasm. It localises to the nucleus. The protein resides in the endoplasmic reticulum membrane. Receptor for both mineralocorticoids (MC) such as aldosterone and glucocorticoids (GC) such as corticosterone or cortisol. Binds to mineralocorticoid response elements (MRE) and transactivates target genes. The effect of MC is to increase ion and water transport and thus raise extracellular fluid volume and blood pressure and lower potassium levels. The polypeptide is Mineralocorticoid receptor (Nr3c2) (Rattus norvegicus (Rat)).